Here is a 431-residue protein sequence, read N- to C-terminus: Glucose-1-phosphate adenylyltransferase (431 aa).

Position 39 (Lys-39) interacts with beta-D-fructose 1,6-bisphosphate. AMP contacts are provided by Arg-40, His-46, and Arg-52. Tyr-114 contacts alpha-D-glucose 1-phosphate. Arg-130 is a binding site for AMP. Residues Gly-179, 194–195 (EK), and Ser-212 contribute to the alpha-D-glucose 1-phosphate site. Arg-386 is a binding site for AMP. Beta-D-fructose 1,6-bisphosphate is bound by residues 419 to 423 (REMLR) and 429 to 431 (QER).

The protein belongs to the bacterial/plant glucose-1-phosphate adenylyltransferase family. As to quaternary structure, homotetramer.

The catalysed reaction is alpha-D-glucose 1-phosphate + ATP + H(+) = ADP-alpha-D-glucose + diphosphate. The protein operates within glycan biosynthesis; glycogen biosynthesis. Its activity is regulated as follows. Allosterically activated by fructose-1,6-bisphosphate (F16BP) and inhibited by AMP. In terms of biological role, involved in the biosynthesis of ADP-glucose, a building block required for the elongation reactions to produce glycogen. Catalyzes the reaction between ATP and alpha-D-glucose 1-phosphate (G1P) to produce pyrophosphate and ADP-Glc. This is Glucose-1-phosphate adenylyltransferase from Enterobacter sp. (strain 638).